Reading from the N-terminus, the 74-residue chain is Control protein C.MunI (74 aa).

The HTH cro/C1-type domain maps to 12–67; it reads LKKLRKEKTDLSQESFAAQIDLDRTYYSSIENGKRNVSLVNLEKISAGLGITLSEL. Positions 23–42 form a DNA-binding region, H-T-H motif; that stretch reads SQESFAAQIDLDRTYYSSIE.

In terms of biological role, probably controls expression of its associated restriction-modification system MunI. This chain is Control protein C.MunI, found in Mycoplasma sp.